A 451-amino-acid chain; its full sequence is GABA transporter 1 (451 aa).

11 helical membrane passes run 35-55 (CGFH…PYAF), 57-77 (FLGW…TFYS), 115-135 (VGPI…LLGG), 153-173 (LFEF…FPSF), 182-202 (LSLL…IYIG), 222-242 (VFGI…GIIP), 262-282 (MCYL…YWAF), 308-328 (FIFL…VVYL), 356-376 (LVVR…LPFF), 382-402 (LLGA…FFNF), and 411-431 (FIFW…VIAM).

The protein belongs to the amino acid/polyamine transporter 2 family. Amino acid/auxin permease (AAAP) (TC 2.A.18.2) subfamily. As to expression, highly expressed in flowers and at lower levels in roots, leaves and stems.

It is found in the cell membrane. Functionally, high affinity gamma-aminobutyric acid (GABA) transporter probably involved in GABA uptake into cells. When expressed in a heterologous system (Xenopus oocytes), imports GABA, butylamine, beta- and L-Alanine, 5-aminovaleric acid, 6-aminocaproic acid and 8-aminocaprylic acid, but does not mediate the transport of proline or glycine betaine. In Arabidopsis thaliana (Mouse-ear cress), this protein is GABA transporter 1 (GAT1).